The primary structure comprises 518 residues: Probable thiamine biosynthetic bifunctional enzyme (518 aa).

Positions M1–R229 are thiamine-phosphate synthase. 4-amino-2-methyl-5-(diphosphooxymethyl)pyrimidine contacts are provided by residues Q40–K44 and N72. The Mg(2+) site is built by D73 and D92. Residue S111 coordinates 4-amino-2-methyl-5-(diphosphooxymethyl)pyrimidine. A 2-[(2R,5Z)-2-carboxy-4-methylthiazol-5(2H)-ylidene]ethyl phosphate-binding site is contributed by T137–T139. K140 contributes to the 4-amino-2-methyl-5-(diphosphooxymethyl)pyrimidine binding site. 2-[(2R,5Z)-2-carboxy-4-methylthiazol-5(2H)-ylidene]ethyl phosphate-binding positions include G173 and V199–S200. A hydroxyethylthiazole kinase region spans residues S230–E518. Position 281 (M281) interacts with 5-(2-hydroxyethyl)-4-methylthiazole. Positions 355 and 403 each coordinate ATP. Residue A430 participates in 5-(2-hydroxyethyl)-4-methylthiazole binding. The active-site Proton acceptor; for hydroxyethylthiazole kinase activity is C433.

The protein in the N-terminal section; belongs to the thiamine-phosphate synthase family. It in the C-terminal section; belongs to the Thz kinase family. Mg(2+) serves as cofactor.

It carries out the reaction 2-[(2R,5Z)-2-carboxy-4-methylthiazol-5(2H)-ylidene]ethyl phosphate + 4-amino-2-methyl-5-(diphosphooxymethyl)pyrimidine + 2 H(+) = thiamine phosphate + CO2 + diphosphate. The catalysed reaction is 2-(2-carboxy-4-methylthiazol-5-yl)ethyl phosphate + 4-amino-2-methyl-5-(diphosphooxymethyl)pyrimidine + 2 H(+) = thiamine phosphate + CO2 + diphosphate. It catalyses the reaction 4-methyl-5-(2-phosphooxyethyl)-thiazole + 4-amino-2-methyl-5-(diphosphooxymethyl)pyrimidine + H(+) = thiamine phosphate + diphosphate. The enzyme catalyses 5-(2-hydroxyethyl)-4-methylthiazole + ATP = 4-methyl-5-(2-phosphooxyethyl)-thiazole + ADP + H(+). Its pathway is cofactor biosynthesis; thiamine diphosphate biosynthesis; 4-methyl-5-(2-phosphoethyl)-thiazole from 5-(2-hydroxyethyl)-4-methylthiazole: step 1/1. The protein operates within cofactor biosynthesis; thiamine diphosphate biosynthesis; thiamine phosphate from 4-amino-2-methyl-5-diphosphomethylpyrimidine and 4-methyl-5-(2-phosphoethyl)-thiazole: step 1/1. In terms of biological role, condenses 4-methyl-5-(beta-hydroxyethyl)thiazole monophosphate (THZ-P) and 2-methyl-4-amino-5-hydroxymethyl pyrimidine pyrophosphate (HMP-PP) to form thiamine monophosphate (TMP). The protein is Probable thiamine biosynthetic bifunctional enzyme (thi4) of Schizosaccharomyces pombe (strain 972 / ATCC 24843) (Fission yeast).